A 540-amino-acid polypeptide reads, in one-letter code: T-complex protein 1 subunit theta (540 aa).

The protein belongs to the TCP-1 chaperonin family. Heterooligomeric complex of about 850 to 900 kDa that forms two stacked rings, 12 to 16 nm in diameter.

It localises to the cytoplasm. Its function is as follows. Molecular chaperone; assists the folding of proteins upon ATP hydrolysis. Known to play a role, in vitro, in the folding of actin and tubulin. In yeast may play a role in mitotic spindle formation. This Candida albicans (Yeast) protein is T-complex protein 1 subunit theta (CCT8).